We begin with the raw amino-acid sequence, 198 residues long: Ribonuclease HII (198 aa).

The RNase H type-2 domain occupies 14 to 198 (GVIAGVDEVG…KNFAPISRAL (185 aa)). 3 residues coordinate a divalent metal cation: aspartate 20, glutamate 21, and aspartate 112.

Belongs to the RNase HII family. Mn(2+) serves as cofactor. It depends on Mg(2+) as a cofactor.

The protein resides in the cytoplasm. It catalyses the reaction Endonucleolytic cleavage to 5'-phosphomonoester.. Endonuclease that specifically degrades the RNA of RNA-DNA hybrids. The protein is Ribonuclease HII of Wolbachia pipientis wMel.